A 514-amino-acid polypeptide reads, in one-letter code: 2,3-bisphosphoglycerate-independent phosphoglycerate mutase (514 aa).

The Mn(2+) site is built by D14 and S64. S64 acts as the Phosphoserine intermediate in catalysis. Residues H125, 155 to 156, R187, R193, 263 to 266, and K336 contribute to the substrate site; these read RD and RADR. 5 residues coordinate Mn(2+): D403, H407, D444, H445, and H463.

Belongs to the BPG-independent phosphoglycerate mutase family. Monomer. It depends on Mn(2+) as a cofactor.

The enzyme catalyses (2R)-2-phosphoglycerate = (2R)-3-phosphoglycerate. The protein operates within carbohydrate degradation; glycolysis; pyruvate from D-glyceraldehyde 3-phosphate: step 3/5. Catalyzes the interconversion of 2-phosphoglycerate and 3-phosphoglycerate. The polypeptide is 2,3-bisphosphoglycerate-independent phosphoglycerate mutase (Shewanella sp. (strain MR-7)).